The primary structure comprises 487 residues: GTPase Der (487 aa).

EngA-type G domains follow at residues 3-166 (PVVA…AEAM) and 199-372 (IKLA…DSAT). GTP-binding positions include 9 to 16 (GRPNVGKS), 56 to 60 (DTGGI), 118 to 121 (NKID), 205 to 212 (GKPNVGKS), 252 to 256 (DTAGV), and 317 to 320 (NKWD). Positions 373 to 457 (RRVSTSMLTR…PIQLRFQEGD (85 aa)) constitute a KH-like domain.

It belongs to the TRAFAC class TrmE-Era-EngA-EngB-Septin-like GTPase superfamily. EngA (Der) GTPase family. In terms of assembly, associates with the 50S ribosomal subunit.

In terms of biological role, GTPase that plays an essential role in the late steps of ribosome biogenesis. This chain is GTPase Der, found in Shewanella oneidensis (strain ATCC 700550 / JCM 31522 / CIP 106686 / LMG 19005 / NCIMB 14063 / MR-1).